The following is a 296-amino-acid chain: NH(3)-dependent NAD(+) synthetase (296 aa).

Position 30–37 (30–37 (GVSGGLDS)) interacts with ATP. D36 provides a ligand contact to Mg(2+). R157 is a binding site for deamido-NAD(+). Position 182 (E182) interacts with Mg(2+). Deamido-NAD(+) contacts are provided by K190 and D197. Residues K206 and S228 each coordinate ATP.

Belongs to the NAD synthetase family. In terms of assembly, homodimer.

It carries out the reaction deamido-NAD(+) + NH4(+) + ATP = AMP + diphosphate + NAD(+) + H(+). The protein operates within cofactor biosynthesis; NAD(+) biosynthesis; NAD(+) from deamido-NAD(+) (ammonia route): step 1/1. Its function is as follows. Catalyzes the ATP-dependent amidation of deamido-NAD to form NAD. Uses ammonia as a nitrogen source. The chain is NH(3)-dependent NAD(+) synthetase from Coprothermobacter proteolyticus (strain ATCC 35245 / DSM 5265 / OCM 4 / BT).